The sequence spans 441 residues: Transcriptional regulatory protein ZraR (441 aa).

The Response regulatory domain maps to 7-121 (DILVVDDDIS…NLQATLEKAL (115 aa)). D56 carries the 4-aspartylphosphate modification. Residues 141-370 (MVGKSPAMQH…LENAVERAVV (230 aa)) form the Sigma-54 factor interaction domain. ATP-binding residues include G172, T173, R329, and R359. The segment at residues 421-440 (KTEAARQLGITRKTLLAKLS) is a DNA-binding region (H-T-H motif).

In terms of assembly, monomer. In terms of processing, phosphorylated by ZraS.

The protein resides in the cytoplasm. Its activity is regulated as follows. Activity of the ZraS/ZraR two-component system is repressed by the zinc-bound form of ZraP, which probably interacts with the periplasmic region of ZraS. Part of the Zra signaling pathway, an envelope stress response (ESR) system composed of the periplasmic accessory protein ZraP, the histidine kinase ZraS and the transcriptional regulator ZraR. The ZraPSR system contributes to antibiotic resistance and is important for membrane integrity in the presence of membrane-targeting biocides. ZraR is a member of the two-component regulatory system ZraS/ZraR. When activated by ZraS, acts in conjunction with sigma-54 to regulate the expression of zraP in the presence of high Zn(2+) or Pb(2+) concentrations. Also positively autoregulates the expression of the zraSR operon. Binds to a region within the zraP-zraSR intergenic region that is characterized by two inverted repeats separated by a 14 bp spacer. In addition, controls a regulon of genes of diverse functions that may be critical to maintain envelope integrity and cell survival under stressful conditions. The system has no direct role in zinc or copper resistance. The sequence is that of Transcriptional regulatory protein ZraR from Escherichia coli (strain K12).